We begin with the raw amino-acid sequence, 218 residues long: Large ribosomal subunit protein uL4 (218 aa).

The segment at 46-102 (ARQGTHSTKTRGEVRGGGRKPFRQKGTGRARQGSIRAPHFTGGGISHGPKPRDYSQR) is disordered. Over residues 62–73 (GGRKPFRQKGTG) the composition is skewed to basic residues.

This sequence belongs to the universal ribosomal protein uL4 family. As to quaternary structure, part of the 50S ribosomal subunit.

Functionally, one of the primary rRNA binding proteins, this protein initially binds near the 5'-end of the 23S rRNA. It is important during the early stages of 50S assembly. It makes multiple contacts with different domains of the 23S rRNA in the assembled 50S subunit and ribosome. In terms of biological role, forms part of the polypeptide exit tunnel. The protein is Large ribosomal subunit protein uL4 of Corynebacterium glutamicum (strain R).